A 310-amino-acid chain; its full sequence is Glutaminase (310 aa).

Substrate contacts are provided by Ser-66, Asn-117, Glu-161, Asn-168, Tyr-192, Tyr-244, and Val-262. Residue Lys-294 is modified to N6-acetyllysine.

Belongs to the glutaminase family. As to quaternary structure, homotetramer.

The catalysed reaction is L-glutamine + H2O = L-glutamate + NH4(+). This Escherichia coli O81 (strain ED1a) protein is Glutaminase.